Reading from the N-terminus, the 155-residue chain is Small ribosomal subunit protein uS7 (155 aa).

This sequence belongs to the universal ribosomal protein uS7 family. In terms of assembly, part of the 30S ribosomal subunit. Contacts proteins S9 and S11.

One of the primary rRNA binding proteins, it binds directly to 16S rRNA where it nucleates assembly of the head domain of the 30S subunit. Is located at the subunit interface close to the decoding center, probably blocks exit of the E-site tRNA. This is Small ribosomal subunit protein uS7 from Chlorobium chlorochromatii (strain CaD3).